Consider the following 472-residue polypeptide: Probable dipeptidase A (472 aa).

Cys-10 is an active-site residue.

This sequence belongs to the peptidase C69 family.

The catalysed reaction is an L-aminoacyl-L-amino acid + H2O = 2 an L-alpha-amino acid. The protein is Probable dipeptidase A (pepDA) of Streptococcus pyogenes serotype M18 (strain MGAS8232).